A 260-amino-acid chain; its full sequence is Alpha-acetolactate decarboxylase (260 aa).

Belongs to the alpha-acetolactate decarboxylase family.

It carries out the reaction (2S)-2-acetolactate + H(+) = (R)-acetoin + CO2. It functions in the pathway polyol metabolism; (R,R)-butane-2,3-diol biosynthesis; (R,R)-butane-2,3-diol from pyruvate: step 2/3. In terms of biological role, converts acetolactate into acetoin, which can be excreted by the cells. This may be a mechanism for controlling the internal pH of cells in the stationary stage. This is Alpha-acetolactate decarboxylase (budA) from Klebsiella aerogenes (Enterobacter aerogenes).